The chain runs to 488 residues: Altronate oxidoreductase (488 aa).

Residue 18–29 (VIQFGEGNFLRA) participates in NAD(+) binding.

This sequence belongs to the mannitol dehydrogenase family. UxaB subfamily.

The catalysed reaction is D-altronate + NAD(+) = keto-D-tagaturonate + NADH + H(+). The protein operates within carbohydrate metabolism; pentose and glucuronate interconversion. This Pectobacterium atrosepticum (strain SCRI 1043 / ATCC BAA-672) (Erwinia carotovora subsp. atroseptica) protein is Altronate oxidoreductase.